We begin with the raw amino-acid sequence, 324 residues long: MTKLQLKYRELKIISVIAASENISHAATVLGIAQANVSKYLADFESKVGLKVFDRTTRQLMLTPFGTALLPYINDMLDRNEQLNNFIADYKHEKRGRVTIYAPTGIITYLSKHVIDKIKDIGDITLSLKTCNLERNAFYEGVEFPDDCDVLISYAPPKDESLVASFITQYAVTAYASQRYLEKHPISRPDELEHHSCILIDSMMIDDANIWRFNVAGSKEVRDYRVKGNYVCDNTQSALELARNHLGIVFAPDKSVQSDLQDGTLVPCFQQPYEWWLDLVAIFRKREYQPWRVQYVLDEMLREIRHQLAQSQQLRPEQAAESED.

Positions Leu-6–Thr-63 constitute an HTH lysR-type domain. A DNA-binding region (H-T-H motif) is located at residues Ile-23–Ala-42.

Belongs to the LysR transcriptional regulatory family.

This is an uncharacterized protein from Escherichia coli (strain K12).